Here is a 321-residue protein sequence, read N- to C-terminus: Iron(3+)-hydroxamate-binding protein YxeB (321 aa).

Residues M1–A20 form the signal peptide. The N-palmitoyl cysteine moiety is linked to residue C21. The S-diacylglycerol cysteine moiety is linked to residue C21. Low complexity predominate over residues T24–S33. The interval T24 to G48 is disordered. In terms of domain architecture, Fe/B12 periplasmic-binding spans R58–A316.

It belongs to the bacterial solute-binding protein 8 family. As to quaternary structure, the complex is composed of an ATP-binding protein (FhuC), two transmembrane proteins (FhuB and FhuG) and a solute-binding protein (FhuD or YxeB).

The protein localises to the cell membrane. It localises to the membrane raft. Part of the ABC transporter complex FhuCBGD involved in iron(3+)-hydroxamate import. Binds the iron(3+)-hydroxamate complex and transfers it to the membrane-bound permease. Partially required for the transport of desferrioxamine. The polypeptide is Iron(3+)-hydroxamate-binding protein YxeB (yxeB) (Bacillus subtilis (strain 168)).